Here is a 131-residue protein sequence, read N- to C-terminus: D-ribose pyranase (131 aa).

Residue His20 is the Proton donor of the active site. Substrate-binding positions include Asp28, His98, and 120-122 (YSN).

It belongs to the RbsD / FucU family. RbsD subfamily. Homodecamer.

Its subcellular location is the cytoplasm. It carries out the reaction beta-D-ribopyranose = beta-D-ribofuranose. The protein operates within carbohydrate metabolism; D-ribose degradation; D-ribose 5-phosphate from beta-D-ribopyranose: step 1/2. Its function is as follows. Catalyzes the interconversion of beta-pyran and beta-furan forms of D-ribose. The chain is D-ribose pyranase from Limosilactobacillus reuteri (strain DSM 20016) (Lactobacillus reuteri).